Consider the following 94-residue polypeptide: Co-chaperonin GroES (94 aa).

This sequence belongs to the GroES chaperonin family. As to quaternary structure, heptamer of 7 subunits arranged in a ring. Interacts with the chaperonin GroEL.

Its subcellular location is the cytoplasm. In terms of biological role, together with the chaperonin GroEL, plays an essential role in assisting protein folding. The GroEL-GroES system forms a nano-cage that allows encapsulation of the non-native substrate proteins and provides a physical environment optimized to promote and accelerate protein folding. GroES binds to the apical surface of the GroEL ring, thereby capping the opening of the GroEL channel. The polypeptide is Co-chaperonin GroES (Streptococcus equinus (Streptococcus bovis)).